We begin with the raw amino-acid sequence, 467 residues long: Asparagine--tRNA ligase (467 aa).

It belongs to the class-II aminoacyl-tRNA synthetase family. As to quaternary structure, homodimer.

The protein localises to the cytoplasm. It catalyses the reaction tRNA(Asn) + L-asparagine + ATP = L-asparaginyl-tRNA(Asn) + AMP + diphosphate + H(+). This Bacteroides fragilis (strain ATCC 25285 / DSM 2151 / CCUG 4856 / JCM 11019 / LMG 10263 / NCTC 9343 / Onslow / VPI 2553 / EN-2) protein is Asparagine--tRNA ligase.